The primary structure comprises 566 residues: MESTMRSPLPYGNACATCARAKCRCVPRNGGRGRCERCHHLNKECRAPQGRRKIQPKTLSRSVQLERKMDGLMSLLTSFGGRTDLPTPVQRQSEVQGMWRTEVESGTEDEETSASEEEYLRAFRTQRLQFLPLIHIPATTTVGDLKLQSPFLWQCISAVESKNTARQATLCVKIRELAGKRLLVDCDKSLDLLQGVLVYLAWITLHSQPHKSSLCMYSQMAIGLVFELGLNKPAPPDLSMTVSNSNAVGHMPGLEASISTRRTMHERRAVLSCFVLTSIIAQFLGRMGPLQWTSHMKQCLDILAESEESPGDRVLVQLTRTRLLVDQISHGPWSEGLYGLNSAQTLATFHLKALQSQLETIRAEIPIQLADNKPILFHLFDTELSLYEAALVKPLADEDFSSQRLDHLYACLRVVKQFFDLFFTIPPAGYTSLALPYIAQVSHCLVILFRLSTLDYPGWDKSTVKNTADILCIAEQISTRMAQVGDAIGMRSEGAYGDPFSKWGMMMQKLRSEWAIRLPDCSEVVVDRSSAESSCPSIEMGDLDCFVNWSELGWVMEGAGAGGFIQ.

The segment at residues 15–45 is a DNA-binding region (zn(2)-C6 fungal-type); the sequence is CATCARAKCRCVPRNGGRGRCERCHHLNKEC.

The protein localises to the nucleus. Its function is as follows. Transcription factor; part of the gene cluster that mediates the biosynthesis of oxopyrrolidines, polyketide-amino acid hybrid compounds with feature structures of tetramic acid. The polypeptide is Transcription factor opdL (Penicillium oxalicum (strain 114-2 / CGMCC 5302) (Penicillium decumbens)).